The sequence spans 660 residues: ATP-dependent zinc metalloprotease FtsH (660 aa).

Residues 1–20 (MMPSSQRPSPRGSRQSPSPD) form a disordered region. Topologically, residues 1–24 (MMPSSQRPSPRGSRQSPSPDQRGR) are cytoplasmic. The chain crosses the membrane as a helical span at residues 25–45 (IAFAILATLVVAVLLLTLFSH). The Extracellular portion of the chain corresponds to 46–118 (APSGQPLGYS…VQVSYITPGP (73 aa)). A helical membrane pass occupies residues 119-139 (GIASTIIEYVIFFGIFIGIWV). Residues 140–660 (YLTRRTQGSV…ASHDDTDPVS (521 aa)) are Cytoplasmic-facing. Residue 213–220 (GPPGTGKT) participates in ATP binding. His435 contributes to the Zn(2+) binding site. Glu436 is a catalytic residue. Residues His439 and Asp511 each contribute to the Zn(2+) site.

It in the central section; belongs to the AAA ATPase family. In the C-terminal section; belongs to the peptidase M41 family. As to quaternary structure, homohexamer. Zn(2+) is required as a cofactor.

The protein resides in the cell membrane. Its function is as follows. Acts as a processive, ATP-dependent zinc metallopeptidase for both cytoplasmic and membrane proteins. Plays a role in the quality control of integral membrane proteins. The protein is ATP-dependent zinc metalloprotease FtsH of Acidimicrobium ferrooxidans (strain DSM 10331 / JCM 15462 / NBRC 103882 / ICP).